The chain runs to 140 residues: Lymphocyte antigen 6H (140 aa).

The signal sequence occupies residues 1–25 (MLPAAMKGLGLVLLAALLCSSPAHG). The UPAR/Ly6 domain occupies 26 to 91 (LWCQDCTLTT…RHFFSDYLMG (66 aa)). 5 disulfide bridges follow: Cys28-Cys52, Cys31-Cys40, Cys45-Cys73, Cys77-Cys104, and Cys105-Cys110. A glycan (N-linked (GlcNAc...) asparagine) is linked at Asn36.

The protein resides in the cell membrane. This Bos taurus (Bovine) protein is Lymphocyte antigen 6H (LY6H).